The following is a 212-amino-acid chain: Small ribosomal subunit protein uS5 (212 aa).

One can recognise an S5 DRBM domain in the interval 48 to 111 (LEDEVLDINM…DIAKLNIIDV (64 aa)).

The protein belongs to the universal ribosomal protein uS5 family. In terms of assembly, part of the 30S ribosomal subunit. Contacts protein S4.

Its function is as follows. With S4 and S12 plays an important role in translational accuracy. The polypeptide is Small ribosomal subunit protein uS5 (Haloarcula marismortui (strain ATCC 43049 / DSM 3752 / JCM 8966 / VKM B-1809) (Halobacterium marismortui)).